The primary structure comprises 296 residues: Sulfotransferase 1C2 (296 aa).

Lys-49–Trp-54 contributes to the 3'-phosphoadenylyl sulfate binding site. Arg-107–His-109 contributes to the substrate binding site. His-109 serves as the catalytic Proton acceptor. Residues Arg-131, Ser-139, Tyr-194, and Thr-228–Met-233 contribute to the 3'-phosphoadenylyl sulfate site. Ser-139 is modified (phosphoserine). Ser-254 is subject to Phosphoserine. Phe-256–Gly-260 is a binding site for 3'-phosphoadenylyl sulfate.

Belongs to the sulfotransferase 1 family. As to expression, highly expressed in kidney and at lower levels in stomach and liver. More specifically found in the epithelia of proximal tubules of the kidney, of the bile duct, of the gastric mucosa, and in hepatocytes.

The protein localises to the cytoplasm. The protein resides in the lysosome. It localises to the mitochondrion. It catalyses the reaction a phenol + 3'-phosphoadenylyl sulfate = an aryl sulfate + adenosine 3',5'-bisphosphate + H(+). It carries out the reaction cholesterol + 3'-phosphoadenylyl sulfate = cholesterol sulfate + adenosine 3',5'-bisphosphate + H(+). Sulfotransferase that utilizes 3'-phospho-5'-adenylyl sulfate (PAPS) to catalyze the sulfate conjugation of phenolic compounds. Does not transfer sulfate to steroids, dopamine, acetaminophen, or alpha-naphthol. Except in mitochondria, where it can add sulfate to cholesterol producing cholesterol sulfate, which alters mitochondrial membrane organization, and impacts protein complex mobility increasing state-III respiration, thereby modulating mitochondrial respiration. Catalyzes the sulfation of the carcinogenic N-hydroxy-2-acetylaminofluorene leading to highly reactive intermediates capable of forming DNA adducts, potentially resulting in mutagenesis. This Rattus norvegicus (Rat) protein is Sulfotransferase 1C2 (Sult1c2).